The chain runs to 136 residues: Phospholipase A2 (136 aa).

Positions 8, 10, and 12 each coordinate Ca(2+). Intrachain disulfides connect C9–C31, C30–C70, C37–C63, C61–C95, and C105–C115. A glycan (N-linked (GlcNAc...) asparagine) is linked at N16. H34 is an active-site residue. D35 is a binding site for Ca(2+). Residue D64 is part of the active site.

This sequence belongs to the phospholipase A2 family. Ca(2+) serves as cofactor. In terms of tissue distribution, expressed by the venom gland.

It is found in the secreted. The enzyme catalyses a 1,2-diacyl-sn-glycero-3-phosphocholine + H2O = a 1-acyl-sn-glycero-3-phosphocholine + a fatty acid + H(+). Its function is as follows. PLA2 catalyzes the calcium-dependent hydrolysis of the 2-acyl groups in 3-sn-phosphoglycerides. This Bombus pensylvanicus (American bumblebee) protein is Phospholipase A2.